A 259-amino-acid polypeptide reads, in one-letter code: TCF3 fusion partner homolog (259 aa).

Disordered regions lie at residues 51–72 (GLGDSGLRERDEEEEAARGRRR) and 141–210 (EDDG…APVQ). Residue Ser-167 is modified to Phosphoserine. Thr-172 is modified (phosphothreonine). Residues Ser-180 and Ser-188 each carry the phosphoserine modification. The residue at position 203 (Thr-203) is a Phosphothreonine. Residue Lys-222 forms a Glycyl lysine isopeptide (Lys-Gly) (interchain with G-Cter in SUMO2) linkage. The segment at 240-259 (VSRGPDKLLPYPTLASPPFD) is disordered. Ser-255 carries the phosphoserine modification.

As to quaternary structure, interacts with NOL3; translocates NOL3 into the nucleus and negatively regulated TFPT-induced cell death. Component of the chromatin remodeling INO80 complex; specifically part of a complex module associated with the N-terminus of INO80. As to expression, ubiquitously expressed. Abundant in the brain.

It localises to the nucleus. Functionally, appears to promote apoptosis in a p53/TP53-independent manner. In terms of biological role, putative regulatory component of the chromatin remodeling INO80 complex which is involved in transcriptional regulation, DNA replication and probably DNA repair. In Rattus norvegicus (Rat), this protein is TCF3 fusion partner homolog (Tfpt).